Consider the following 227-residue polypeptide: Cytochrome c oxidase subunit 2 (227 aa).

Over 1–14 (MAYPFQLGLQDATS) the chain is Mitochondrial intermembrane. The helical transmembrane segment at 15–45 (PIMEELTNFHDHTLMIVFLISSLVLYIISLM) threads the bilayer. The Mitochondrial matrix portion of the chain corresponds to 46–59 (LTTKLTHTSTMDAQ). A helical membrane pass occupies residues 60–87 (EVETIWTILPAVILILIALPSLRILYMM). Over 88 to 227 (DEINNPVLTV…HFENWSTSMI (140 aa)) the chain is Mitochondrial intermembrane. Residues His161, Cys196, Glu198, Cys200, His204, and Met207 each coordinate Cu cation. Residue Glu198 participates in Mg(2+) binding.

It belongs to the cytochrome c oxidase subunit 2 family. As to quaternary structure, component of the cytochrome c oxidase (complex IV, CIV), a multisubunit enzyme composed of 14 subunits. The complex is composed of a catalytic core of 3 subunits MT-CO1, MT-CO2 and MT-CO3, encoded in the mitochondrial DNA, and 11 supernumerary subunits COX4I, COX5A, COX5B, COX6A, COX6B, COX6C, COX7A, COX7B, COX7C, COX8 and NDUFA4, which are encoded in the nuclear genome. The complex exists as a monomer or a dimer and forms supercomplexes (SCs) in the inner mitochondrial membrane with NADH-ubiquinone oxidoreductase (complex I, CI) and ubiquinol-cytochrome c oxidoreductase (cytochrome b-c1 complex, complex III, CIII), resulting in different assemblies (supercomplex SCI(1)III(2)IV(1) and megacomplex MCI(2)III(2)IV(2)). Found in a complex with TMEM177, COA6, COX18, COX20, SCO1 and SCO2. Interacts with TMEM177 in a COX20-dependent manner. Interacts with COX20. Interacts with COX16. Cu cation is required as a cofactor.

The protein resides in the mitochondrion inner membrane. The catalysed reaction is 4 Fe(II)-[cytochrome c] + O2 + 8 H(+)(in) = 4 Fe(III)-[cytochrome c] + 2 H2O + 4 H(+)(out). In terms of biological role, component of the cytochrome c oxidase, the last enzyme in the mitochondrial electron transport chain which drives oxidative phosphorylation. The respiratory chain contains 3 multisubunit complexes succinate dehydrogenase (complex II, CII), ubiquinol-cytochrome c oxidoreductase (cytochrome b-c1 complex, complex III, CIII) and cytochrome c oxidase (complex IV, CIV), that cooperate to transfer electrons derived from NADH and succinate to molecular oxygen, creating an electrochemical gradient over the inner membrane that drives transmembrane transport and the ATP synthase. Cytochrome c oxidase is the component of the respiratory chain that catalyzes the reduction of oxygen to water. Electrons originating from reduced cytochrome c in the intermembrane space (IMS) are transferred via the dinuclear copper A center (CU(A)) of subunit 2 and heme A of subunit 1 to the active site in subunit 1, a binuclear center (BNC) formed by heme A3 and copper B (CU(B)). The BNC reduces molecular oxygen to 2 water molecules using 4 electrons from cytochrome c in the IMS and 4 protons from the mitochondrial matrix. The chain is Cytochrome c oxidase subunit 2 (MT-CO2) from Praomys taitae (Taita hill rat).